The primary structure comprises 123 residues: uncharacterized protein (123 aa).

A signal peptide spans 1-20; it reads MARTLALRASAGLVAGMAMA.

This is an uncharacterized protein from Mycobacterium bovis (strain ATCC BAA-935 / AF2122/97).